The sequence spans 435 residues: Gamma-glutamyl phosphate reductase (435 aa).

It belongs to the gamma-glutamyl phosphate reductase family.

Its subcellular location is the cytoplasm. It carries out the reaction L-glutamate 5-semialdehyde + phosphate + NADP(+) = L-glutamyl 5-phosphate + NADPH + H(+). Its pathway is amino-acid biosynthesis; L-proline biosynthesis; L-glutamate 5-semialdehyde from L-glutamate: step 2/2. Catalyzes the NADPH-dependent reduction of L-glutamate 5-phosphate into L-glutamate 5-semialdehyde and phosphate. The product spontaneously undergoes cyclization to form 1-pyrroline-5-carboxylate. The chain is Gamma-glutamyl phosphate reductase from Xylella fastidiosa (strain M12).